We begin with the raw amino-acid sequence, 341 residues long: HTH-type transcriptional repressor PurR (341 aa).

Residues alanine 2 to valine 56 enclose the HTH lacI-type domain. The segment at residues isoleucine 4–asparagine 23 is a DNA-binding region (H-T-H motif). A DNA-binding region spans residues serine 48 to valine 56. Hypoxanthine-binding residues include tyrosine 73, arginine 190, threonine 192, phenylalanine 221, and aspartate 275.

As to quaternary structure, homodimer.

Its pathway is purine metabolism; purine nucleotide biosynthesis [regulation]. Its function is as follows. Is the main repressor of the genes involved in the de novo synthesis of purine nucleotides, regulating purB, purC, purEK, purF, purHD, purL, purMN and guaBA expression. PurR is allosterically activated to bind its cognate DNA by binding the purine corepressors, hypoxanthine or guanine, thereby effecting transcription repression. This is HTH-type transcriptional repressor PurR from Pectobacterium carotovorum subsp. carotovorum (strain PC1).